Here is a 361-residue protein sequence, read N- to C-terminus: Septin-2 (361 aa).

Residue tyrosine 17 is modified to Phosphotyrosine. Residues 34–306 form the Septin-type G domain; sequence KGFEFTLMVV…ENFRSERLKR (273 aa). The interval 44–51 is G1 motif; that stretch reads GESGLGKS. GTP-binding positions include 44-51, threonine 78, glycine 104, and 183-191; these read GESGLGKS and KADTLTLKE. The segment at 101-104 is G3 motif; sequence DTPG. The interval 182-185 is G4 motif; that stretch reads AKAD. Position 190 is an N6-acetyllysine (lysine 190). Tyrosine 211 is modified (phosphotyrosine). Serine 218 carries the phosphoserine modification. GTP-binding residues include glycine 241 and arginine 256. Positions 260–270 are important for dimerization; sequence WGVVEVENPEH.

Belongs to the TRAFAC class TrmE-Era-EngA-EngB-Septin-like GTPase superfamily. Septin GTPase family. Septins polymerize into heterooligomeric protein complexes that form filaments, and associate with cellular membranes, actin filaments and microtubules. GTPase activity is required for filament formation. Septin filaments are assembled from asymmetrical heterotrimers, composed of SEPTIN2, SEPTIN6 and SEPTIN7 that associate head-to-head to form a hexameric unit. Interaction between SEPTIN2 and SEPTIN7 seems indirect. Also interacts with SEPTIN9 and SEPTIN5. Interaction with SEPTIN4 not detected. Component of a septin core octameric complex consisting of SEPTIN12, SEPTIN7, SEPTIN6 and SEPTIN2 or SEPTIN4 in the order 12-7-6-2-2-6-7-12 or 12-7-6-4-4-6-7-12 and located in the sperm annulus. Interacts with MAP4. Interacts with DZIP1L.

It is found in the cytoplasm. Its subcellular location is the cytoskeleton. The protein resides in the spindle. The protein localises to the cleavage furrow. It localises to the midbody. It is found in the cell cortex. Its subcellular location is the cell projection. The protein resides in the cilium membrane. The protein localises to the cilium. It localises to the flagellum. Functionally, filament-forming cytoskeletal GTPase. Forms a filamentous structure with SEPTIN12, SEPTIN6, SEPTIN2 and probably SEPTIN4 at the sperm annulus which is required for the structural integrity and motility of the sperm tail during postmeiotic differentiation. Required for normal organization of the actin cytoskeleton. Plays a role in the biogenesis of polarized columnar-shaped epithelium by maintaining polyglutamylated microtubules, thus facilitating efficient vesicle transport, and by impeding MAP4 binding to tubulin. Required for the progression through mitosis. Forms a scaffold at the midplane of the mitotic splindle required to maintain CENPE localization at kinetochores and consequently chromosome congression. During anaphase, may be required for chromosome segregation and spindle elongation. Plays a role in ciliogenesis and collective cell movements. In cilia, required for the integrity of the diffusion barrier at the base of the primary cilium that prevents diffusion of transmembrane proteins between the cilia and plasma membranes: probably acts by regulating the assembly of the tectonic-like complex (also named B9 complex) by localizing TMEM231 protein. In Rattus norvegicus (Rat), this protein is Septin-2.